The sequence spans 195 residues: dCTP deaminase (195 aa).

DCTP-binding positions include 105–110 (RSSLGR), aspartate 123, 131–133 (TLE), glutamine 152, tyrosine 166, lysine 173, and glutamine 177. The active-site Proton donor/acceptor is glutamate 133. The interval 159–195 (KTPADRPYGAERGSKYQGQSGPQASKIQGDREFGGDQ) is disordered. Positions 160 to 172 (TPADRPYGAERGS) are enriched in basic and acidic residues. A compositionally biased stretch (polar residues) spans 174 to 184 (YQGQSGPQASK). Basic and acidic residues predominate over residues 186–195 (QGDREFGGDQ).

This sequence belongs to the dCTP deaminase family. Homotrimer.

It carries out the reaction dCTP + H2O + H(+) = dUTP + NH4(+). Its pathway is pyrimidine metabolism; dUMP biosynthesis; dUMP from dCTP (dUTP route): step 1/2. Functionally, catalyzes the deamination of dCTP to dUTP. The polypeptide is dCTP deaminase (Haloarcula marismortui (strain ATCC 43049 / DSM 3752 / JCM 8966 / VKM B-1809) (Halobacterium marismortui)).